Reading from the N-terminus, the 573-residue chain is MLFIDFCKILDKIEKTTKRLEKTDYFVELIDFIKTNGKPENLKQVSQITIGRVFAEFENKEIGIGPNLLLEAVKTTGISEKDLKSKIKETGDIGIAVENLSSNIKQVSLFSQALTLEEVYSTLKKLSEIEGNSSQKKKTRIISNLLILATPVESRYISRLILEDMRIGMNIPTILASFSNYFNINKETVEKIYAVTNDIGLLGEKLISGSNIENDSELQLKVFRPIKPMLAQLTPSIEAAIIETKMPQFETKYDGARVQVHKSDGNVKIYSRRLENITNSVPELVEEIKKIDIDNIILEGECVAMDLSSGKPRPFQDILRRFRRKYDIDKMAEKIALRIYFFDVLYYEKGLIDTPLKDRREILEKLFGTNNWDTELSKIEKEIFSNKMLFSSFKLNSDDPILAKEFFNWSLSIGHEGIMIKNPDAPYTPGSRVKTMYKVKPTLENLDVVVTRAKIGMGKRKDWYGSYEISVKDYEDNLHVIGNVGTGLTEDDLEKLTKIVNEIKIEDLGEEVILEPKIVLEVTYEEIQTSEKYEMGYALRFPRVVQIREDKSINDINTLDDVKKIYEIERNRK.

Residue glutamate 250 coordinates ATP. Residue lysine 252 is the N6-AMP-lysine intermediate of the active site. ATP is bound by residues arginine 257, arginine 272, glutamate 301, phenylalanine 342, arginine 432, and lysine 438.

It belongs to the ATP-dependent DNA ligase family. Mg(2+) serves as cofactor.

The enzyme catalyses ATP + (deoxyribonucleotide)n-3'-hydroxyl + 5'-phospho-(deoxyribonucleotide)m = (deoxyribonucleotide)n+m + AMP + diphosphate.. DNA ligase that seals nicks in double-stranded DNA during DNA replication, DNA recombination and DNA repair. The polypeptide is DNA ligase (Methanococcus maripaludis (strain C7 / ATCC BAA-1331)).